We begin with the raw amino-acid sequence, 410 residues long: MANVVVTGEQLDKAIREVVHILEDAVGCTAGPKGLTVAISKPYGAPEITKDGYKVIKSIKPEDPLALAIANIIAQSASQCNDKVGDGTTTCSILTAKVIEEVSKAKAAGADIVCIKDGVLKAKEAVLDALMSMKREVLSEEEIAQVATISANGDKNIGVKIAQCVQEVGKDGVITVEESKGFKELDVEKTDGMQFDRGYLSPYFVTNSEKMLVEFENPYILLTEKKLNIIQPILPILENVARSGRPLLIIAEDVEGEALSTLVLNKLRGGLHVAAVKAPGFGDRRKDMLGDIAILTGAKHVISDDLAIKMEDLTLAELGTAKNIRITKDTTTIIGSVDNSSDNVQSRINQIKVQIESSTSDYDKEKLRERLAKLSGGVAVLKVGGSSEVEVKERKDRVEDALHATRAAVE.

ATP contacts are provided by residues 29 to 32, Lys50, and 86 to 90; these read TAGP and DGTTT.

This sequence belongs to the chaperonin (HSP60) family. As to quaternary structure, forms a cylinder of 14 subunits composed of two heptameric rings stacked back-to-back. Interacts with the co-chaperonin GroES.

Its subcellular location is the cytoplasm. The catalysed reaction is ATP + H2O + a folded polypeptide = ADP + phosphate + an unfolded polypeptide.. Together with its co-chaperonin GroES, plays an essential role in assisting protein folding. The GroEL-GroES system forms a nano-cage that allows encapsulation of the non-native substrate proteins and provides a physical environment optimized to promote and accelerate protein folding. In Ehrlichia canis, this protein is Chaperonin GroEL.